Consider the following 103-residue polypeptide: Nucleoid-associated protein A2cp1_3777 (103 aa).

This sequence belongs to the YbaB/EbfC family. In terms of assembly, homodimer.

The protein resides in the cytoplasm. The protein localises to the nucleoid. Functionally, binds to DNA and alters its conformation. May be involved in regulation of gene expression, nucleoid organization and DNA protection. In Anaeromyxobacter dehalogenans (strain 2CP-1 / ATCC BAA-258), this protein is Nucleoid-associated protein A2cp1_3777.